Here is a 146-residue protein sequence, read N- to C-terminus: Leghemoglobin Lb120-29 (146 aa).

Residues 2-146 enclose the Globin domain; sequence GFTDKQEALV…LASAIKKAMS (145 aa). Tyr-24 and Tyr-29 each carry nitrated tyrosine. Ser-44 is a binding site for heme b. A Phosphoserine modification is found at Ser-44. Position 61 (His-61) interacts with O2. Heme b-binding residues include Lys-64, His-93, and Lys-96. A Nitrated tyrosine modification is found at Tyr-134.

It belongs to the plant globin family. In terms of assembly, monomer. In terms of processing, nitrated in effective nodules and particularly in hypoxic conditions; this mechanism may play a protective role in the symbiosis by buffering toxic peroxynitrite NO(2)(-). Nitration level decrease during nodule senescence. Post-translationally, phosphorylation at Ser-44 disrupts the molecular environment of its porphyrin ring oxygen binding pocket, thus leading to a reduced oxygen consumption and to the delivery of oxygen O(2) to symbiosomes. As to expression, root nodules.

The protein localises to the cytoplasm. Its subcellular location is the cytosol. The protein resides in the nucleus. Functionally, leghemoglobin that reversibly binds oxygen O(2) through a pentacoordinated heme iron. In root nodules, facilitates the diffusion of oxygen to the bacteroids while preventing the bacterial nitrogenase from being inactivated by buffering dioxygen, nitric oxide and carbon monoxide, and promoting the formation of reactive oxygen species (ROS, e.g. H(2)O(2)). This role is essential for symbiotic nitrogen fixation (SNF). The chain is Leghemoglobin Lb120-29 from Pisum sativum (Garden pea).